A 185-amino-acid chain; its full sequence is Translation initiation factor IF-3 (185 aa).

It belongs to the IF-3 family. Monomer.

It localises to the cytoplasm. Functionally, IF-3 binds to the 30S ribosomal subunit and shifts the equilibrium between 70S ribosomes and their 50S and 30S subunits in favor of the free subunits, thus enhancing the availability of 30S subunits on which protein synthesis initiation begins. This Rickettsia prowazekii (strain Madrid E) protein is Translation initiation factor IF-3.